A 785-amino-acid polypeptide reads, in one-letter code: Tripartite terminase subunit 1 (785 aa).

Residues 201 to 229 (CAVCFEELCVTANQGATIARRLADRICNH) form a C3H1-type zinc finger. Residues 439 to 487 (GGATGGAEEEEPRAAAEEGGRRRGAGTPASEDGERGPEPGAQGPESWGD) are disordered. Residues 450-459 (PRAAAEEGGR) are compositionally biased toward basic and acidic residues. Position 696–703 (696–703 (FASVYRCG)) interacts with ATP.

It belongs to the herpesviridae TRM1 protein family. In terms of assembly, associates with TRM2 and TRM3 to form the tripartite terminase complex. Interacts with portal protein.

Its subcellular location is the host nucleus. Functionally, component of the molecular motor that translocates viral genomic DNA in empty capsid during DNA packaging. Forms a tripartite terminase complex together with TRM2 and TRM3 in the host cytoplasm. Once the complex reaches the host nucleus, it interacts with the capsid portal vertex. This portal forms a ring in which genomic DNA is translocated into the capsid. TRM1 carries an endonuclease activity that plays an important role for the cleavage of concatemeric viral DNA into unit length genomes. The protein is Tripartite terminase subunit 1 of Human herpesvirus 2 (strain HG52) (HHV-2).